The chain runs to 457 residues: Argininosuccinate lyase (457 aa).

The protein belongs to the lyase 1 family. Argininosuccinate lyase subfamily.

The protein localises to the cytoplasm. It catalyses the reaction 2-(N(omega)-L-arginino)succinate = fumarate + L-arginine. It functions in the pathway amino-acid biosynthesis; L-arginine biosynthesis; L-arginine from L-ornithine and carbamoyl phosphate: step 3/3. The protein is Argininosuccinate lyase of Histophilus somni (strain 129Pt) (Haemophilus somnus).